The chain runs to 276 residues: Rhomboid protease GlpG (276 aa).

A run of 6 helical transmembrane segments spans residues 94–114, 142–162, 169–189, 192–212, 229–249, and 250–270; these read GPVT…MSLI, IFMH…WYLG, LGSG…GYVQ, FSGP…GYVW, LIIF…GMSM, and ANGA…VDTL. The Nucleophile role is filled by Ser-201. His-254 is an active-site residue.

This sequence belongs to the peptidase S54 family.

The protein resides in the cell inner membrane. The catalysed reaction is Cleaves type-1 transmembrane domains using a catalytic dyad composed of serine and histidine that are contributed by different transmembrane domains.. Its function is as follows. Rhomboid-type serine protease that catalyzes intramembrane proteolysis. This is Rhomboid protease GlpG from Salmonella agona (strain SL483).